A 370-amino-acid polypeptide reads, in one-letter code: Dual-specificity RNA methyltransferase RlmN (370 aa).

Glu-93 functions as the Proton acceptor in the catalytic mechanism. The 239-residue stretch at 99-337 (EEGRGTLCVS…VTTVRKTRGD (239 aa)) folds into the Radical SAM core domain. Residues Cys-106 and Cys-343 are joined by a disulfide bond. Residues Cys-113, Cys-117, and Cys-120 each contribute to the [4Fe-4S] cluster site. Residues 167 to 168 (GE), Ser-199, 221 to 223 (SLH), and Asn-300 each bind S-adenosyl-L-methionine. The active-site S-methylcysteine intermediate is the Cys-343.

Belongs to the radical SAM superfamily. RlmN family. The cofactor is [4Fe-4S] cluster.

It is found in the cytoplasm. It catalyses the reaction adenosine(2503) in 23S rRNA + 2 reduced [2Fe-2S]-[ferredoxin] + 2 S-adenosyl-L-methionine = 2-methyladenosine(2503) in 23S rRNA + 5'-deoxyadenosine + L-methionine + 2 oxidized [2Fe-2S]-[ferredoxin] + S-adenosyl-L-homocysteine. It carries out the reaction adenosine(37) in tRNA + 2 reduced [2Fe-2S]-[ferredoxin] + 2 S-adenosyl-L-methionine = 2-methyladenosine(37) in tRNA + 5'-deoxyadenosine + L-methionine + 2 oxidized [2Fe-2S]-[ferredoxin] + S-adenosyl-L-homocysteine. Functionally, specifically methylates position 2 of adenine 2503 in 23S rRNA and position 2 of adenine 37 in tRNAs. m2A2503 modification seems to play a crucial role in the proofreading step occurring at the peptidyl transferase center and thus would serve to optimize ribosomal fidelity. This is Dual-specificity RNA methyltransferase RlmN from Francisella tularensis subsp. mediasiatica (strain FSC147).